The primary structure comprises 610 residues: DNA mismatch repair protein MutL (610 aa).

It belongs to the DNA mismatch repair MutL/HexB family.

In terms of biological role, this protein is involved in the repair of mismatches in DNA. It is required for dam-dependent methyl-directed DNA mismatch repair. May act as a 'molecular matchmaker', a protein that promotes the formation of a stable complex between two or more DNA-binding proteins in an ATP-dependent manner without itself being part of a final effector complex. The protein is DNA mismatch repair protein MutL of Rickettsia africae (strain ESF-5).